The sequence spans 200 residues: Large ribosomal subunit protein uL4 (200 aa).

The tract at residues 43–71 is disordered; sequence RAQKTRAEVSGSGKKPWRQKGTGRARSGD.

It belongs to the universal ribosomal protein uL4 family. As to quaternary structure, part of the 50S ribosomal subunit.

Functionally, one of the primary rRNA binding proteins, this protein initially binds near the 5'-end of the 23S rRNA. It is important during the early stages of 50S assembly. It makes multiple contacts with different domains of the 23S rRNA in the assembled 50S subunit and ribosome. Its function is as follows. Forms part of the polypeptide exit tunnel. This chain is Large ribosomal subunit protein uL4, found in Pasteurella multocida (strain Pm70).